Here is a 625-residue protein sequence, read N- to C-terminus: Pyriculol/pyriculariol biosynthesis cluster transcription factor 1 (625 aa).

Disordered regions lie at residues 1–83 (MATE…ATQD) and 466–496 (PMSATTAPSPSEYNSPSFFSQAPENTPLPAS). Over residues 46–59 (TPSPSTPANPNSAS) the composition is skewed to low complexity. The segment at residues 73–132 (KNQKRQRATQDQLTTLEQEFAKNPTPTATVRDRIAEEINMTERSVQIWFQNRRAKIKLMA) is a DNA-binding region (homeobox). A compositionally biased stretch (polar residues) spans 467-496 (MSATTAPSPSEYNSPSFFSQAPENTPLPAS).

Its subcellular location is the nucleus. Its function is as follows. Transcriptional regulator; part of the gene cluster that mediates the biosynthesis of pyriculol and pyriculariol, two heptaketides that induce lesion formation upon application on rice leaves but are dispensable for pathogenicity. With TRF1, negatively regulates the expression of the gene cluster and the subsequent pyriculol and pyriculariol production. The sequence is that of Pyriculol/pyriculariol biosynthesis cluster transcription factor 1 from Pyricularia oryzae (strain 70-15 / ATCC MYA-4617 / FGSC 8958) (Rice blast fungus).